The sequence spans 73 residues: UPF0435 protein Lm4b_01721 (73 aa).

Belongs to the UPF0435 family.

The sequence is that of UPF0435 protein Lm4b_01721 from Listeria monocytogenes serotype 4b (strain CLIP80459).